The chain runs to 147 residues: Putative pre-16S rRNA nuclease (147 aa).

Belongs to the YqgF nuclease family.

It localises to the cytoplasm. Functionally, could be a nuclease involved in processing of the 5'-end of pre-16S rRNA. This Ureaplasma parvum serovar 3 (strain ATCC 27815 / 27 / NCTC 11736) protein is Putative pre-16S rRNA nuclease.